The chain runs to 189 residues: Photosystem I assembly protein Ycf4 (189 aa).

2 helical membrane-spanning segments follow: residues 31–51 (TVILVGASGFFLVGISSYFGF) and 70–90 (VMSFYGVAGILLSVYLWLTII).

This sequence belongs to the Ycf4 family.

Its subcellular location is the plastid. The protein localises to the chloroplast thylakoid membrane. Functionally, seems to be required for the assembly of the photosystem I complex. This Chlorokybus atmophyticus (Soil alga) protein is Photosystem I assembly protein Ycf4.